A 565-amino-acid chain; its full sequence is CTP synthase (565 aa).

An amidoligase domain region spans residues 1 to 272 (MARPKNVKHI…DLRVLKKLGL (272 aa)). Ser18 provides a ligand contact to CTP. Ser18 lines the UTP pocket. 19–24 (SLGKGI) serves as a coordination point for ATP. Tyr59 is a binding site for L-glutamine. Asp76 provides a ligand contact to ATP. Asp76 and Glu146 together coordinate Mg(2+). CTP is bound by residues 153 to 155 (DIE), 193 to 198 (KTKPTQ), and Lys229. UTP is bound by residues 193 to 198 (KTKPTQ) and Lys229. A Glutamine amidotransferase type-1 domain is found at 299–543 (TIGICGKYTE…VAAAKEYAHG (245 aa)). Gly363 serves as a coordination point for L-glutamine. Residue Cys390 is the Nucleophile; for glutamine hydrolysis of the active site. Residues 391–394 (LGMQ), Glu414, and Arg471 each bind L-glutamine. Active-site residues include His516 and Glu518.

Belongs to the CTP synthase family. In terms of assembly, homotetramer.

It catalyses the reaction UTP + L-glutamine + ATP + H2O = CTP + L-glutamate + ADP + phosphate + 2 H(+). It carries out the reaction L-glutamine + H2O = L-glutamate + NH4(+). The enzyme catalyses UTP + NH4(+) + ATP = CTP + ADP + phosphate + 2 H(+). It functions in the pathway pyrimidine metabolism; CTP biosynthesis via de novo pathway; CTP from UDP: step 2/2. With respect to regulation, allosterically activated by GTP, when glutamine is the substrate; GTP has no effect on the reaction when ammonia is the substrate. The allosteric effector GTP functions by stabilizing the protein conformation that binds the tetrahedral intermediate(s) formed during glutamine hydrolysis. Inhibited by the product CTP, via allosteric rather than competitive inhibition. In terms of biological role, catalyzes the ATP-dependent amination of UTP to CTP with either L-glutamine or ammonia as the source of nitrogen. Regulates intracellular CTP levels through interactions with the four ribonucleotide triphosphates. This chain is CTP synthase, found in Pelodictyon phaeoclathratiforme (strain DSM 5477 / BU-1).